A 411-amino-acid polypeptide reads, in one-letter code: MQKHEYVNPVKLYSAIRDEKFPFILESAEKSGRARYTYISFNPLYTVRVGSRTRVDGEVISKISDPFDALNEIHVKGLLVGYVAYEAVKNYIGKKPQTPSVFGCYDGYFVYDHYLRKLFSVNVENADKIVERAKRVEVEQVRGNSEVLRAGSREKFEKMVERGKEQIFEGEVYQIVLSREYVVDTDLSPFQMYLNLRETNPSPYMFLLEFDRALIGSSPETMGRVEGNSFIINPIAGTARREAGREKEIAEKLLSDEKERAEHVMLVDLARNDVRKVCRAGSVRVSRFMEVVEYPSVLHIESEVVGELKAGVTHFDAMKATFPAGTVTGAPKLRAIELIDEIEGDCRGVYAGAVGYFSENVSDLAIAIRMIEFDGKARIRAGAGIVADSVPEREFFETENKIARVLRAVGL.

Residues Ser27 and 203 to 205 (PYM) contribute to the L-tryptophan site. 237–238 (GT) serves as a coordination point for chorismate. Mg(2+) is bound at residue Glu262. Chorismate contacts are provided by residues Tyr350, Arg369, 382–384 (GAG), and Gly384. Residue Glu397 participates in Mg(2+) binding.

It belongs to the anthranilate synthase component I family. Heterotetramer consisting of two non-identical subunits: a beta subunit (TrpG) and a large alpha subunit (TrpE). Mg(2+) is required as a cofactor.

The enzyme catalyses chorismate + L-glutamine = anthranilate + pyruvate + L-glutamate + H(+). Its pathway is amino-acid biosynthesis; L-tryptophan biosynthesis; L-tryptophan from chorismate: step 1/5. With respect to regulation, feedback inhibited by tryptophan. Its function is as follows. Part of a heterotetrameric complex that catalyzes the two-step biosynthesis of anthranilate, an intermediate in the biosynthesis of L-tryptophan. In the first step, the glutamine-binding beta subunit (TrpG) of anthranilate synthase (AS) provides the glutamine amidotransferase activity which generates ammonia as a substrate that, along with chorismate, is used in the second step, catalyzed by the large alpha subunit of AS (TrpE) to produce anthranilate. In the absence of TrpG, TrpE can synthesize anthranilate directly from chorismate and high concentrations of ammonia. In Archaeoglobus fulgidus (strain ATCC 49558 / DSM 4304 / JCM 9628 / NBRC 100126 / VC-16), this protein is Anthranilate synthase component 1 (trpE).